Reading from the N-terminus, the 181-residue chain is ECF RNA polymerase sigma factor EcfG (181 aa).

Residues 15–77 are sigma-70 factor domain-2; that stretch reads VPSLRAFAIS…FRSDYRKRRR (63 aa). A sigma-70 factor domain-4 region spans residues 103–155; the sequence is EEFRAALDKLPQDQREALILVGASGFSYEDAAAICGCAVGTIKSRVNRARSKL.

The protein belongs to the sigma-70 factor family. ECF subfamily.

Its function is as follows. Sigma factors are initiation factors that promote the attachment of RNA polymerase to specific initiation sites and are then released. Regulates expression of hpnP under a variety of stresses, including high temperature, pH stress, and presence of nonionic osmolytes. The protein is ECF RNA polymerase sigma factor EcfG of Rhodopseudomonas palustris (strain TIE-1).